A 245-amino-acid polypeptide reads, in one-letter code: MGGQKTHFGFSTVNEDEKAGKVAEVFHSVAKNYDIMNDVMSAGLHRVWKHFTIHTAHLKKGDKVLDIAGGTGDLSRGWAKRVGKEGEVWLTDINSSMLTVGRDRLLNEGMILPVSLADAEKLPFPDNYFNLVSVAFGLRNMTYKDAALKEMYRVLKPGGTLLVLEFSKIYKPLEGAYDFYSFKLLPVMGRLIAKDADSYQYLAESIRMHPDQETLKQMMLDAGFDSVDYHNMSAGIVALHKGVKF.

S-adenosyl-L-methionine contacts are provided by residues Thr-71, Asp-92, and 118 to 119 (DA).

This sequence belongs to the class I-like SAM-binding methyltransferase superfamily. MenG/UbiE family.

The enzyme catalyses a 2-demethylmenaquinol + S-adenosyl-L-methionine = a menaquinol + S-adenosyl-L-homocysteine + H(+). It catalyses the reaction a 2-methoxy-6-(all-trans-polyprenyl)benzene-1,4-diol + S-adenosyl-L-methionine = a 5-methoxy-2-methyl-3-(all-trans-polyprenyl)benzene-1,4-diol + S-adenosyl-L-homocysteine + H(+). Its pathway is quinol/quinone metabolism; menaquinone biosynthesis; menaquinol from 1,4-dihydroxy-2-naphthoate: step 2/2. It participates in cofactor biosynthesis; ubiquinone biosynthesis. Functionally, methyltransferase required for the conversion of demethylmenaquinol (DMKH2) to menaquinol (MKH2) and the conversion of 2-polyprenyl-6-methoxy-1,4-benzoquinol (DDMQH2) to 2-polyprenyl-3-methyl-6-methoxy-1,4-benzoquinol (DMQH2). This Neisseria gonorrhoeae (strain ATCC 700825 / FA 1090) protein is Ubiquinone/menaquinone biosynthesis C-methyltransferase UbiE.